Reading from the N-terminus, the 861-residue chain is DNA mismatch repair protein MutS (861 aa).

An ATP-binding site is contributed by 618-625; it reads GPNMGGKS.

It belongs to the DNA mismatch repair MutS family.

Its function is as follows. This protein is involved in the repair of mismatches in DNA. It is possible that it carries out the mismatch recognition step. This protein has a weak ATPase activity. This is DNA mismatch repair protein MutS from Shewanella sp. (strain MR-4).